Reading from the N-terminus, the 854-residue chain is Golgin subfamily A member 6-like protein 22 (854 aa).

Disordered regions lie at residues 1-114, 320-348, 366-447, 481-568, 581-681, and 714-854; these read MLMW…HQEA, QEEK…MRRQ, MHEQ…MWRQ, QEEK…MWRQ, RQEE…EQEE, and QEEK…MQEH. The segment covering 15–35 has biased composition (basic residues); it reads LPTHPHLPTHPHLPTHPHLPT. Residues 45–66 show a composition bias toward basic and acidic residues; the sequence is MSKETRQSKLAEAKEQLTDHHP. 2 stretches are compositionally biased toward polar residues: residues 67 to 77 and 85 to 97; these read QTNPSVGTAAS and NNGT…TSGG. Over residues 100–114 the composition is skewed to basic and acidic residues; it reads SPEDEQKASHQHQEA. Residues 103–854 are a coiled coil; sequence DEQKASHQHQ…RQQEEKMQEH (752 aa).

It belongs to the GOLGA6 family.

The polypeptide is Golgin subfamily A member 6-like protein 22 (Homo sapiens (Human)).